The primary structure comprises 165 residues: UPF0262 protein blr1257 (165 aa).

Belongs to the UPF0262 family.

The sequence is that of UPF0262 protein blr1257 from Bradyrhizobium diazoefficiens (strain JCM 10833 / BCRC 13528 / IAM 13628 / NBRC 14792 / USDA 110).